Reading from the N-terminus, the 344-residue chain is Unsaturated rhamnogalacturonyl hydrolase YesR (344 aa).

Residues 30–31 (DW), Asn-74, and 118–128 (QHTVNAAEYVF) each bind substrate. The active-site Proton donor is Asp-135. Substrate is bound by residues 198–202 (RANGW) and 308–309 (NA).

The protein belongs to the glycosyl hydrolase 105 family. In terms of assembly, monomer.

The protein localises to the cytoplasm. It catalyses the reaction 2-O-(4-deoxy-beta-L-threo-hex-4-enopyranuronosyl)-alpha-L-rhamnose + H2O = 5-dehydro-4-deoxy-D-glucuronate + L-rhamnopyranose. Its function is as follows. Catalyzes the hydrolysis of unsaturated rhamnogalacturonan disaccharide to yield unsaturated D-galacturonic acid and L-rhamnose. It cannot act on unsaturated glucuronyl hydrolase (UGL) substrates containing unsaturated D-glucuronic acid at the non-reducing terminus, although the active pockets of YesR and UGL are very similar. The chain is Unsaturated rhamnogalacturonyl hydrolase YesR (yesR) from Bacillus subtilis (strain 168).